The sequence spans 436 residues: Acrosin (436 aa).

Positions 1–19 (MVEMLPTVAVLVLAVSVVA) are cleaved as a signal peptide. An N-linked (GlcNAc...) asparagine glycan is attached at Asn22. 6 disulfide bridges follow: Cys25–Cys155, Cys29–Cys163, Cys74–Cys90, Cys178–Cys247, Cys210–Cys226, and Cys237–Cys267. The Peptidase S1 domain maps to 43 to 291 (IVSGQSAQLG…YLDWIASKIG (249 aa)). Residues His89 and Asp143 each act as charge relay system in the active site. A glycan (N-linked (GlcNAc...) asparagine) is linked at Asn211. Residue Ser241 is the Charge relay system of the active site. A propeptide spans 346 to 436 (PSSTQTSSSL…NKPSEPFLHS (91 aa)) (pro-rich).

This sequence belongs to the peptidase S1 family. In terms of assembly, heavy chain (catalytic) and a light chain linked by two disulfide bonds. Forms a heterodimer with SERPINA5.

It carries out the reaction Preferential cleavage: Arg-|-Xaa, Lys-|-Xaa.. Inhibited by SERPINA5. Functionally, acrosin is the major protease of mammalian spermatozoa. It is a serine protease of trypsin-like cleavage specificity, it is synthesized in a zymogen form, proacrosin and stored in the acrosome. In Mus musculus (Mouse), this protein is Acrosin (Acr).